Consider the following 411-residue polypeptide: Glutamyl-tRNA reductase (411 aa).

Substrate contacts are provided by residues 48–51 (TCNR), Ser106, 111–113 (EDQ), and Gln117. Catalysis depends on Cys49, which acts as the Nucleophile. 186 to 191 (GAGDMG) is an NADP(+) binding site.

The protein belongs to the glutamyl-tRNA reductase family. As to quaternary structure, homodimer.

The catalysed reaction is (S)-4-amino-5-oxopentanoate + tRNA(Glu) + NADP(+) = L-glutamyl-tRNA(Glu) + NADPH + H(+). The protein operates within porphyrin-containing compound metabolism; protoporphyrin-IX biosynthesis; 5-aminolevulinate from L-glutamyl-tRNA(Glu): step 1/2. Catalyzes the NADPH-dependent reduction of glutamyl-tRNA(Glu) to glutamate 1-semialdehyde (GSA). This is Glutamyl-tRNA reductase from Clostridium novyi (strain NT).